A 350-amino-acid chain; its full sequence is 3-dehydroquinate synthase (350 aa).

NAD(+) is bound by residues Gly106–Asp110, Thr130–Ser131, Lys143, and Lys152. The Zn(2+) site is built by Glu185, His246, and His263.

The protein belongs to the sugar phosphate cyclases superfamily. Dehydroquinate synthase family. Co(2+) is required as a cofactor. Zn(2+) serves as cofactor. Requires NAD(+) as cofactor.

It localises to the cytoplasm. The catalysed reaction is 7-phospho-2-dehydro-3-deoxy-D-arabino-heptonate = 3-dehydroquinate + phosphate. It functions in the pathway metabolic intermediate biosynthesis; chorismate biosynthesis; chorismate from D-erythrose 4-phosphate and phosphoenolpyruvate: step 2/7. Functionally, catalyzes the conversion of 3-deoxy-D-arabino-heptulosonate 7-phosphate (DAHP) to dehydroquinate (DHQ). This chain is 3-dehydroquinate synthase, found in Clostridium beijerinckii (strain ATCC 51743 / NCIMB 8052) (Clostridium acetobutylicum).